The following is a 684-amino-acid chain: Methionine--tRNA ligase (684 aa).

Residues 15–25 (PYANGAIHLGH) carry the 'HIGH' region motif. Zn(2+) is bound by residues Cys146, Cys149, Cys159, and Cys162. Positions 331–335 (KMSKS) match the 'KMSKS' region motif. Lys334 provides a ligand contact to ATP. Residues 582 to 684 (DFAKLDLRVA…SGVTAGMQVR (103 aa)) form the tRNA-binding domain.

The protein belongs to the class-I aminoacyl-tRNA synthetase family. MetG type 1 subfamily. Homodimer. Requires Zn(2+) as cofactor.

The protein localises to the cytoplasm. The catalysed reaction is tRNA(Met) + L-methionine + ATP = L-methionyl-tRNA(Met) + AMP + diphosphate. In terms of biological role, is required not only for elongation of protein synthesis but also for the initiation of all mRNA translation through initiator tRNA(fMet) aminoacylation. This Glaesserella parasuis serovar 5 (strain SH0165) (Haemophilus parasuis) protein is Methionine--tRNA ligase.